Reading from the N-terminus, the 502-residue chain is GTPase Obg (502 aa).

An Obg domain is found at 2–159 (NRFIDRVVLH…HDLILELKSM (158 aa)). An OBG-type G domain is found at 160-341 (ADVGLVGFPS…LKYKLLEIVQ (182 aa)). Residues 166–173 (GFPSAGKS), 191–195 (FTTLQ), 212–215 (DVPG), 292–295 (NKAD), and 322–324 (SAV) each bind GTP. Mg(2+)-binding residues include serine 173 and threonine 193. Residues 364-444 (DGRRRREEFE…IGGVTFEWEP (81 aa)) enclose the OCT domain.

It belongs to the TRAFAC class OBG-HflX-like GTPase superfamily. OBG GTPase family. As to quaternary structure, monomer. The cofactor is Mg(2+).

Its subcellular location is the cytoplasm. An essential GTPase which binds GTP, GDP and possibly (p)ppGpp with moderate affinity, with high nucleotide exchange rates and a fairly low GTP hydrolysis rate. Plays a role in control of the cell cycle, stress response, ribosome biogenesis and in those bacteria that undergo differentiation, in morphogenesis control. This chain is GTPase Obg, found in Corynebacterium efficiens (strain DSM 44549 / YS-314 / AJ 12310 / JCM 11189 / NBRC 100395).